Consider the following 420-residue polypeptide: D-tagatose-1,6-bisphosphate aldolase subunit GatZ (420 aa).

It belongs to the GatZ/KbaZ family. GatZ subfamily. As to quaternary structure, forms a complex with GatY.

It participates in carbohydrate metabolism; D-tagatose 6-phosphate degradation; D-glyceraldehyde 3-phosphate and glycerone phosphate from D-tagatose 6-phosphate: step 2/2. Its function is as follows. Component of the tagatose-1,6-bisphosphate aldolase GatYZ that is required for full activity and stability of the Y subunit. Could have a chaperone-like function for the proper and stable folding of GatY. When expressed alone, GatZ does not show any aldolase activity. Is involved in the catabolism of galactitol. This chain is D-tagatose-1,6-bisphosphate aldolase subunit GatZ, found in Escherichia coli O9:H4 (strain HS).